The following is a 509-amino-acid chain: ATP synthase subunit alpha (509 aa).

169–176 lines the ATP pocket; sequence GDRQTGKT.

It belongs to the ATPase alpha/beta chains family. F-type ATPases have 2 components, CF(1) - the catalytic core - and CF(0) - the membrane proton channel. CF(1) has five subunits: alpha(3), beta(3), gamma(1), delta(1), epsilon(1). CF(0) has three main subunits: a(1), b(2) and c(9-12). The alpha and beta chains form an alternating ring which encloses part of the gamma chain. CF(1) is attached to CF(0) by a central stalk formed by the gamma and epsilon chains, while a peripheral stalk is formed by the delta and b chains.

The protein localises to the cell inner membrane. It catalyses the reaction ATP + H2O + 4 H(+)(in) = ADP + phosphate + 5 H(+)(out). In terms of biological role, produces ATP from ADP in the presence of a proton gradient across the membrane. The alpha chain is a regulatory subunit. In Rhizobium etli (strain ATCC 51251 / DSM 11541 / JCM 21823 / NBRC 15573 / CFN 42), this protein is ATP synthase subunit alpha.